The chain runs to 485 residues: Glutamate--tRNA ligase (485 aa).

Positions 11–21 match the 'HIGH' region motif; the sequence is PSPTGHLHIGG. The 'KMSKS' region signature appears at 252–256; that stretch reads KMSKR. Lysine 255 is an ATP binding site.

This sequence belongs to the class-I aminoacyl-tRNA synthetase family. Glutamate--tRNA ligase type 1 subfamily. In terms of assembly, monomer.

The protein resides in the cytoplasm. It catalyses the reaction tRNA(Glu) + L-glutamate + ATP = L-glutamyl-tRNA(Glu) + AMP + diphosphate. Catalyzes the attachment of glutamate to tRNA(Glu) in a two-step reaction: glutamate is first activated by ATP to form Glu-AMP and then transferred to the acceptor end of tRNA(Glu). The protein is Glutamate--tRNA ligase of Halalkalibacterium halodurans (strain ATCC BAA-125 / DSM 18197 / FERM 7344 / JCM 9153 / C-125) (Bacillus halodurans).